Reading from the N-terminus, the 206-residue chain is Ion-translocating oxidoreductase complex subunit G (206 aa).

A helical membrane pass occupies residues 9-29 (GITLALFAAGSTGLTAAINQM). The residue at position 174 (threonine 174) is an FMN phosphoryl threonine.

Belongs to the RnfG family. The complex is composed of six subunits: RsxA, RsxB, RsxC, RsxD, RsxE and RsxG. It depends on FMN as a cofactor.

It localises to the cell inner membrane. Functionally, part of a membrane-bound complex that couples electron transfer with translocation of ions across the membrane. Required to maintain the reduced state of SoxR. The protein is Ion-translocating oxidoreductase complex subunit G of Escherichia coli O157:H7.